Here is a 222-residue protein sequence, read N- to C-terminus: UPF0128 protein PF1488 (222 aa).

The protein belongs to the UPF0128 family.

The polypeptide is UPF0128 protein PF1488 (Pyrococcus furiosus (strain ATCC 43587 / DSM 3638 / JCM 8422 / Vc1)).